The sequence spans 225 residues: tRNA (guanine-N(1)-)-methyltransferase (225 aa).

S-adenosyl-L-methionine is bound by residues Gly-112 and 132-137 (IGDYVL).

Belongs to the RNA methyltransferase TrmD family. In terms of assembly, homodimer.

It localises to the cytoplasm. The enzyme catalyses guanosine(37) in tRNA + S-adenosyl-L-methionine = N(1)-methylguanosine(37) in tRNA + S-adenosyl-L-homocysteine + H(+). Its function is as follows. Specifically methylates guanosine-37 in various tRNAs. This chain is tRNA (guanine-N(1)-)-methyltransferase, found in Porphyromonas gingivalis (strain ATCC 33277 / DSM 20709 / CIP 103683 / JCM 12257 / NCTC 11834 / 2561).